Consider the following 252-residue polypeptide: Isoprenyl transferase (252 aa).

The active site involves Asp-32. Asp-32 is a binding site for Mg(2+). Residues 33–36 (GNGR), Trp-37, Arg-45, His-49, and 77–79 (STE) contribute to the substrate site. The Proton acceptor role is filled by Asn-80. Substrate is bound by residues Trp-81, Arg-83, Arg-200, and 206–208 (RLS). Residue Glu-219 participates in Mg(2+) binding.

The protein belongs to the UPP synthase family. Homodimer. Mg(2+) serves as cofactor.

Catalyzes the condensation of isopentenyl diphosphate (IPP) with allylic pyrophosphates generating different type of terpenoids. This is Isoprenyl transferase from Oceanobacillus iheyensis (strain DSM 14371 / CIP 107618 / JCM 11309 / KCTC 3954 / HTE831).